A 1137-amino-acid polypeptide reads, in one-letter code: UDP-N-acetylglucosamine transferase subunit ALG13 (1137 aa).

A glycosyltransferase activity region spans residues 1–125 (MKCVFVTVGT…LHKEGHLFYC (125 aa)). The interval 126 to 400 (TCRVLTCPGQ…GSKKNRNNAV (275 aa)) is deubiquitinase activity. Residues 231-352 (LFRKLTAKDA…SGHYDSVYSK (122 aa)) form the OTU domain. D239 serves as the catalytic For deubiquitinase activity. Catalysis depends on C242, which acts as the Nucleophile; for deubiquitinase activity. H345 functions as the For deubiquitinase activity in the catalytic mechanism. The Tudor domain occupies 492 to 552 (QYYLGDKCQV…KPVTQVMSVP (61 aa)). Disordered stretches follow at residues 641–660 (HFHP…MPRN) and 911–974 (IPHA…SGSD). 2 stretches are compositionally biased toward pro residues: residues 918–946 (LPPP…PPPA) and 956–967 (QPPPPLPPPPYS).

The protein belongs to the glycosyltransferase 28 family. In terms of assembly, forms with ALG14 the active heterodimeric UDP-N-acetylglucosamine transferase complex. Not able to interact with ALG14 to form an active UDP-N-acetylglucosamine transferase complex.

The protein resides in the endoplasmic reticulum membrane. It carries out the reaction an N-acetyl-alpha-D-glucosaminyl-diphospho-di-trans,poly-cis-dolichol + UDP-N-acetyl-alpha-D-glucosamine = an N,N'-diacetylchitobiosyl-diphospho-di-trans,poly-cis-dolichol + UDP + H(+). It participates in protein modification; protein glycosylation. Its function is as follows. Catalytic subunit of the UDP-N-acetylglucosamine transferase complex that operates in the biosynthetic pathway of dolichol-linked oligosaccharides, the glycan precursors employed in protein asparagine (N)-glycosylation. The assembly of dolichol-linked oligosaccharides begins on the cytosolic side of the endoplasmic reticulum membrane and finishes in its lumen. The sequential addition of sugars to dolichol pyrophosphate produces dolichol-linked oligosaccharides containing fourteen sugars, including two GlcNAcs, nine mannoses and three glucoses. Once assembled, the oligosaccharide is transferred from the lipid to nascent proteins by oligosaccharyltransferases. On the cytoplasmic face of the endoplasmic reticulum, the dimeric ALG13/ALG14 complex catalyzes the second step of dolichol pyrophosphate biosynthesis, transferring a beta1,4-linked N-acetylglucosamine (GlcNAc) from UDP-GlcNAc to GlcNAc-pyrophosphatedolichol (Gn-PDol) to produce N,N'-diacetylchitobiosyl diphosphodolichol. N,N'-diacetylchitobiosyl diphosphodolichol is a substrate for ALG1, the following enzyme in the biosynthetic pathway. No glycosyltransferase or deubiquitinase activity is detected for this potential multifunctional enzyme. In Homo sapiens (Human), this protein is UDP-N-acetylglucosamine transferase subunit ALG13.